The primary structure comprises 525 residues: NAD(P)H-quinone oxidoreductase chain 4-2 (525 aa).

The next 14 membrane-spanning stretches (helical) occupy residues 6–26 (FPWL…IPII), 36–56 (WYAL…FYTS), 91–111 (LIIL…PVTL), 115–135 (LFYF…AVQD), 137–157 (LLFF…LAIW), 169–189 (FILY…TMAF), 212–232 (LLLY…IPLH), 243–263 (TAPA…YALI), 277–297 (FAPV…LTSF), 314–334 (MGFV…GAVL), 335–355 (QMVS…ATYD), 375–397 (IFAM…GFVA), 417–437 (VIVV…LLSM), and 464–484 (VFVI…PKLL).

It belongs to the complex I subunit 4 family.

The protein resides in the cellular thylakoid membrane. The catalysed reaction is a plastoquinone + NADH + (n+1) H(+)(in) = a plastoquinol + NAD(+) + n H(+)(out). It catalyses the reaction a plastoquinone + NADPH + (n+1) H(+)(in) = a plastoquinol + NADP(+) + n H(+)(out). Its function is as follows. NDH-1 shuttles electrons from NAD(P)H, via FMN and iron-sulfur (Fe-S) centers, to quinones in the respiratory chain. The immediate electron acceptor for the enzyme in this species is believed to be plastoquinone. Couples the redox reaction to proton translocation (for every two electrons transferred, four hydrogen ions are translocated across the cytoplasmic membrane), and thus conserves the redox energy in a proton gradient. This Nostoc sp. (strain PCC 7120 / SAG 25.82 / UTEX 2576) protein is NAD(P)H-quinone oxidoreductase chain 4-2 (ndhD2).